The sequence spans 823 residues: Valine--tRNA ligase (823 aa).

Residues 52–62 (PTVSGVLHMGH) carry the 'HIGH' region motif. Positions 549–553 (KMSKS) match the 'KMSKS' region motif. Lys552 is an ATP binding site.

This sequence belongs to the class-I aminoacyl-tRNA synthetase family. ValS type 2 subfamily. Monomer.

It is found in the cytoplasm. It catalyses the reaction tRNA(Val) + L-valine + ATP = L-valyl-tRNA(Val) + AMP + diphosphate. Catalyzes the attachment of valine to tRNA(Val). As ValRS can inadvertently accommodate and process structurally similar amino acids such as threonine, to avoid such errors, it has a 'posttransfer' editing activity that hydrolyzes mischarged Thr-tRNA(Val) in a tRNA-dependent manner. The protein is Valine--tRNA ligase of Anaplasma marginale (strain St. Maries).